The sequence spans 93 residues: uncharacterized protein (93 aa).

This is an uncharacterized protein from Enterobacter agglomerans (Erwinia herbicola).